The following is a 295-amino-acid chain: GTPase Era (295 aa).

The 168-residue stretch at 4–171 folds into the Era-type G domain; it reads KSGFVTIIGR…INLIVQYLPE (168 aa). The tract at residues 12 to 19 is G1; it reads GRPNVGKS. 12–19 is a binding site for GTP; sequence GRPNVGKS. A G2 region spans residues 38–42; that stretch reads QTTRN. Residues 59-62 are G3; sequence DTPG. GTP contacts are provided by residues 59–63 and 121–124; these read DTPGI and NKID. A G4 region spans residues 121-124; that stretch reads NKID. Positions 150–152 are G5; the sequence is ISA. The region spanning 194–280 is the KH type-2 domain; it reads IREKILHYTD…YLELWVKVKE (87 aa).

It belongs to the TRAFAC class TrmE-Era-EngA-EngB-Septin-like GTPase superfamily. Era GTPase family. In terms of assembly, monomer.

It is found in the cytoplasm. The protein localises to the cell membrane. Its function is as follows. An essential GTPase that binds both GDP and GTP, with rapid nucleotide exchange. Plays a role in 16S rRNA processing and 30S ribosomal subunit biogenesis and possibly also in cell cycle regulation and energy metabolism. The chain is GTPase Era from Alkaliphilus oremlandii (strain OhILAs) (Clostridium oremlandii (strain OhILAs)).